We begin with the raw amino-acid sequence, 321 residues long: Phosphoenolpyruvate transferase (321 aa).

Residue aspartate 51 participates in 7,8-didemethyl-8-hydroxy-5-deazariboflavin binding.

It belongs to the CofD family. Homodimer. Mg(2+) serves as cofactor.

The catalysed reaction is enolpyruvoyl-2-diphospho-5'-guanosine + 7,8-didemethyl-8-hydroxy-5-deazariboflavin = dehydro coenzyme F420-0 + GMP + H(+). It participates in cofactor biosynthesis; coenzyme F420 biosynthesis. Its function is as follows. Catalyzes the transfer of the phosphoenolpyruvate moiety from enoylpyruvoyl-2-diphospho-5'-guanosine (EPPG) to 7,8-didemethyl-8-hydroxy-5-deazariboflavin (FO) with the formation of dehydro coenzyme F420-0 and GMP. This Kitasatospora aureofaciens (Streptomyces aureofaciens) protein is Phosphoenolpyruvate transferase.